A 1080-amino-acid polypeptide reads, in one-letter code: MIDHSLFDYNERLRKETYECYEIAKKARAMGLDVSDEVEIPIANDMAERVEELIHISGIAGEIRELSKSMSREELSLHISKKVASLLKDNRVEALDKAVRVGLAILTEGILVAPLEGIKDVKINKNDDGTEYVSIVYSGPIRSAGGTAQALSVLIADIVRRELNIGSFSPTDDEIERYIEEVEAYNRLKHLQYMPTPDEIRLVLKNSPVMIDGEGSEEEEVSGHRDMKRITTNRIRGGMCLVLCEGLIQKAKKVLKYTNVMHLNEWNILENIGKNKSDEKTENKSEKYLKDIIAGRPVFGYPNRPGGFRLRYGRSRVSGLAAASINPVTMKILNDFIAIGSQIKVELPGKAAAITPCDSIDGPMVLTRSGDHIKVKSIEQAEKIKNDIERITDLGEILIAYGDFLENNRNLDLSPFTREWWEYYLNDELSIYKSRDPDQFDAVNISRKYKMPMFPGYDYFWHDITMEELNLLINAIANGIINDDSMMLDASVSEILIKLGIEFKKHNNKLILHEYYPLIVSCGFDLINEKIVKVSDERKNDVLGTVNALSGIEIKPRAPVRVGARLGRPEKAGDRKMKPKVHGLFPLMNYGGSTRSIINAARSGSIMDIELGARICRACGTETPFVRCPKCGMPTEDSDSEKKFKIDISKALDDAALRVSTDIGTIKELKGVKKLMSRRSVIEPLEKAILRAKHGISINKDGTCRYDMSDIPITHFKYNEISLTRQRLMELGYSDSDINEIYPQDIIIPRDAASYLLNVSKFIDDLLVNYYGLGPYYMCNSEDDLIGHLVIGLAPHTSGGIVGRIIGFSDVNGCYAHPFFHAAKRRNCDGDEDSIMLLLDGLLNFSKKYLPSTTGGLMDAPLVLTLILDPEEIDKEALNVDTLQRYPLDFYIATEKNAPPASIENMMKTMKVLIKDGRYTGISYSFDTGDISYGTRLSAYKTIGSMEEKIEKQLGLARILRSVDENDVAARVLSSHFLPDIYGNFRSFFTQEFRCTKCNAKYRRVPLSGRCLRCGSSNIILTIHHGSIVKYLNETKKVMNEYKLPDYLVFRINRLLEQIESTFDIENGNDTTLDALIENE.

This sequence belongs to the archaeal DNA polymerase II family. As to quaternary structure, heterodimer of a large subunit and a small subunit.

It carries out the reaction DNA(n) + a 2'-deoxyribonucleoside 5'-triphosphate = DNA(n+1) + diphosphate. It catalyses the reaction Exonucleolytic cleavage in the 3'- to 5'-direction to yield nucleoside 5'-phosphates.. Functionally, possesses two activities: a DNA synthesis (polymerase) and an exonucleolytic activity that degrades single-stranded DNA in the 3'- to 5'-direction. Has a template-primer preference which is characteristic of a replicative DNA polymerase. The polypeptide is DNA polymerase II large subunit (Picrophilus torridus (strain ATCC 700027 / DSM 9790 / JCM 10055 / NBRC 100828 / KAW 2/3)).